The chain runs to 206 residues: Sperm acrosome developmental regulator (206 aa).

A disordered region spans residues 180-206 (RRHHVRCHAAPRPNPAQSLKLDAQSPL).

Expressed in sperm (at protein level).

It is found in the cytoplasmic vesicle. The protein localises to the secretory vesicle. It localises to the acrosome. Functionally, may play a role in acrosome formation and nucleus shaping during spermiogenesis. The polypeptide is Sperm acrosome developmental regulator (Homo sapiens (Human)).